The primary structure comprises 269 residues: Hydroxyethylthiazole kinase (269 aa).

Substrate is bound at residue Met-46. Residues Arg-122 and Thr-168 each coordinate ATP. Gly-195 is a substrate binding site.

Belongs to the Thz kinase family. Mg(2+) serves as cofactor.

The enzyme catalyses 5-(2-hydroxyethyl)-4-methylthiazole + ATP = 4-methyl-5-(2-phosphooxyethyl)-thiazole + ADP + H(+). Its pathway is cofactor biosynthesis; thiamine diphosphate biosynthesis; 4-methyl-5-(2-phosphoethyl)-thiazole from 5-(2-hydroxyethyl)-4-methylthiazole: step 1/1. Functionally, catalyzes the phosphorylation of the hydroxyl group of 4-methyl-5-beta-hydroxyethylthiazole (THZ). The protein is Hydroxyethylthiazole kinase of Geobacillus kaustophilus (strain HTA426).